The chain runs to 478 residues: UDP-N-acetylmuramate--L-alanine ligase (478 aa).

ATP is bound at residue 120–126; that stretch reads GSHGKTT.

The protein belongs to the MurCDEF family.

It localises to the cytoplasm. The enzyme catalyses UDP-N-acetyl-alpha-D-muramate + L-alanine + ATP = UDP-N-acetyl-alpha-D-muramoyl-L-alanine + ADP + phosphate + H(+). It participates in cell wall biogenesis; peptidoglycan biosynthesis. Functionally, cell wall formation. The chain is UDP-N-acetylmuramate--L-alanine ligase from Rickettsia felis (strain ATCC VR-1525 / URRWXCal2) (Rickettsia azadi).